Reading from the N-terminus, the 507-residue chain is Cobyric acid synthase (507 aa).

A GATase cobBQ-type domain is found at 273–468 (RPVIAVIAYP…LHGMFEDPAV (196 aa)). The active-site Nucleophile is the C354. The active site involves H460.

This sequence belongs to the CobB/CobQ family. CobQ subfamily.

It functions in the pathway cofactor biosynthesis; adenosylcobalamin biosynthesis. Catalyzes amidations at positions B, D, E, and G on adenosylcobyrinic A,C-diamide. NH(2) groups are provided by glutamine, and one molecule of ATP is hydrogenolyzed for each amidation. In Polaromonas sp. (strain JS666 / ATCC BAA-500), this protein is Cobyric acid synthase.